The primary structure comprises 498 residues: ATP synthase subunit beta, chloroplastic (498 aa).

172 to 179 (GGAGVGKT) contacts ATP.

This sequence belongs to the ATPase alpha/beta chains family. In terms of assembly, F-type ATPases have 2 components, CF(1) - the catalytic core - and CF(0) - the membrane proton channel. CF(1) has five subunits: alpha(3), beta(3), gamma(1), delta(1), epsilon(1). CF(0) has four main subunits: a(1), b(1), b'(1) and c(9-12).

The protein localises to the plastid. Its subcellular location is the chloroplast thylakoid membrane. It carries out the reaction ATP + H2O + 4 H(+)(in) = ADP + phosphate + 5 H(+)(out). In terms of biological role, produces ATP from ADP in the presence of a proton gradient across the membrane. The catalytic sites are hosted primarily by the beta subunits. In Liriodendron tulipifera (Tuliptree), this protein is ATP synthase subunit beta, chloroplastic.